A 312-amino-acid polypeptide reads, in one-letter code: Lipoyl synthase (312 aa).

7 residues coordinate [4Fe-4S] cluster: Cys-37, Cys-42, Cys-48, Cys-67, Cys-71, Cys-74, and Ser-281. A Radical SAM core domain is found at 52–270; the sequence is RDGPGTATFM…AVAEREFDFL (219 aa).

This sequence belongs to the radical SAM superfamily. Lipoyl synthase family. [4Fe-4S] cluster is required as a cofactor.

It localises to the cytoplasm. It carries out the reaction [[Fe-S] cluster scaffold protein carrying a second [4Fe-4S](2+) cluster] + N(6)-octanoyl-L-lysyl-[protein] + 2 oxidized [2Fe-2S]-[ferredoxin] + 2 S-adenosyl-L-methionine + 4 H(+) = [[Fe-S] cluster scaffold protein] + N(6)-[(R)-dihydrolipoyl]-L-lysyl-[protein] + 4 Fe(3+) + 2 hydrogen sulfide + 2 5'-deoxyadenosine + 2 L-methionine + 2 reduced [2Fe-2S]-[ferredoxin]. It functions in the pathway protein modification; protein lipoylation via endogenous pathway; protein N(6)-(lipoyl)lysine from octanoyl-[acyl-carrier-protein]: step 2/2. Its function is as follows. Catalyzes the radical-mediated insertion of two sulfur atoms into the C-6 and C-8 positions of the octanoyl moiety bound to the lipoyl domains of lipoate-dependent enzymes, thereby converting the octanoylated domains into lipoylated derivatives. This is Lipoyl synthase from Halorubrum lacusprofundi (strain ATCC 49239 / DSM 5036 / JCM 8891 / ACAM 34).